A 303-amino-acid chain; its full sequence is HTH-type transcriptional regulator LysG (303 aa).

The region spanning 6–62 (LDGPQLAALAAVVELGSFDAAAERLHVTPSAVSQRIKSLEQQVGQVLVVREKPCRAT) is the HTH lysR-type domain. Residues 23–42 (FDAAAERLHVTPSAVSQRIK) constitute a DNA-binding region (H-T-H motif).

Belongs to the LysR transcriptional regulatory family. As to quaternary structure, homodimer.

Positively regulates the expression of the exporter LysE and represses its own expression. This chain is HTH-type transcriptional regulator LysG, found in Mycobacterium bovis (strain ATCC BAA-935 / AF2122/97).